The primary structure comprises 473 residues: Lactate utilization protein B (473 aa).

4Fe-4S ferredoxin-type domains lie at G302 to Y332 and Y351 to L380. [4Fe-4S] cluster contacts are provided by C311, C314, C317, C321, C364, C367, and C371.

This sequence belongs to the LutB/YkgF family.

In terms of biological role, is involved in L-lactate degradation and allows cells to grow with lactate as the sole carbon source. Has probably a role as an electron transporter during oxidation of L-lactate. The sequence is that of Lactate utilization protein B from Bacillus cytotoxicus (strain DSM 22905 / CIP 110041 / 391-98 / NVH 391-98).